The chain runs to 295 residues: Phosphoserine phosphatase, chloroplastic (295 aa).

The N-terminal 54 residues, 1–54 (MEALTTSRVVPVQVPCRKLSSLFANFSCLELRRYPCRGLVSIMNHPKLLRPVTA), are a transit peptide targeting the chloroplast. Residue Asp-89 is the Nucleophile of the active site. Positions 89 and 91 each coordinate Mg(2+). Asp-91 serves as the catalytic Proton donor. Substrate is bound by residues Glu-98, Arg-134, 178 to 179 (SG), and Lys-227. Asp-248 is a Mg(2+) binding site.

It belongs to the HAD-like hydrolase superfamily. SerB family. Requires Mg(2+) as cofactor. In terms of tissue distribution, ubiquitous. Mainly expressed in shoot and root meristems, vasculature, pollen, anthers, carpels and seeds.

The protein localises to the plastid. Its subcellular location is the chloroplast. It carries out the reaction O-phospho-L-serine + H2O = L-serine + phosphate. The catalysed reaction is O-phospho-D-serine + H2O = D-serine + phosphate. The protein operates within amino-acid biosynthesis; L-serine biosynthesis; L-serine from 3-phospho-D-glycerate: step 3/3. With respect to regulation, approximately 60% inhibition of PSP activity is observed in presence of 10 mM serine. In terms of biological role, catalyzes the last step in the plastidial phosphorylated pathway of serine biosynthesis (PPSB). The reaction mechanism proceeds via the formation of a phosphoryl-enzyme intermediates. Required for embryo, pollen and root development. May be required preferentially for serine biosynthesis in non-photosynthetic tissues. This Arabidopsis thaliana (Mouse-ear cress) protein is Phosphoserine phosphatase, chloroplastic (PSP).